A 314-amino-acid polypeptide reads, in one-letter code: Tetraacyldisaccharide 4'-kinase (314 aa).

Residue 54–61 coordinates ATP; that stretch reads YIGGTGKT.

Belongs to the LpxK family.

The enzyme catalyses a lipid A disaccharide + ATP = a lipid IVA + ADP + H(+). Its pathway is glycolipid biosynthesis; lipid IV(A) biosynthesis; lipid IV(A) from (3R)-3-hydroxytetradecanoyl-[acyl-carrier-protein] and UDP-N-acetyl-alpha-D-glucosamine: step 6/6. In terms of biological role, transfers the gamma-phosphate of ATP to the 4'-position of a tetraacyldisaccharide 1-phosphate intermediate (termed DS-1-P) to form tetraacyldisaccharide 1,4'-bis-phosphate (lipid IVA). This Pelagibacter ubique (strain HTCC1062) protein is Tetraacyldisaccharide 4'-kinase.